We begin with the raw amino-acid sequence, 276 residues long: Ribosomal RNA small subunit methyltransferase A (276 aa).

S-adenosyl-L-methionine contacts are provided by N19, L21, G46, E71, D94, and N117.

This sequence belongs to the class I-like SAM-binding methyltransferase superfamily. rRNA adenine N(6)-methyltransferase family. RsmA subfamily.

The protein resides in the cytoplasm. It carries out the reaction adenosine(1518)/adenosine(1519) in 16S rRNA + 4 S-adenosyl-L-methionine = N(6)-dimethyladenosine(1518)/N(6)-dimethyladenosine(1519) in 16S rRNA + 4 S-adenosyl-L-homocysteine + 4 H(+). Specifically dimethylates two adjacent adenosines (A1518 and A1519) in the loop of a conserved hairpin near the 3'-end of 16S rRNA in the 30S particle. May play a critical role in biogenesis of 30S subunits. This Burkholderia ambifaria (strain ATCC BAA-244 / DSM 16087 / CCUG 44356 / LMG 19182 / AMMD) (Burkholderia cepacia (strain AMMD)) protein is Ribosomal RNA small subunit methyltransferase A.